The primary structure comprises 269 residues: Growth-regulating factor 11 (269 aa).

Positions 1–11 are enriched in basic and acidic residues; that stretch reads MAAEGEAKKDS. The segment at 1-71 is disordered; sequence MAAEGEAKKD…GKEDVEEGGV (71 aa). Positions 43–52 are enriched in gly residues; that stretch reads GEAGGGGGGG. Over residues 58–68 the composition is skewed to acidic residues; it reads EEEEGKEDVEE. The 36-residue stretch at 114–149 folds into the QLQ domain; the sequence is AFTAMQLQELEQQSRVYQYMAARVPVPTHLVFPIWK. The WRC domain maps to 180 to 224; sequence EPEPGRCRRTDGKKWRCWRNAIANEKYCERHMHRGRKRPVQLVVE. 2 short sequence motifs (bipartite nuclear localization signal) span residues 185-195 and 213-217; these read RCRRTDGKKWR and RGRKR. Residues 212 to 269 form a disordered region; sequence HRGRKRPVQLVVEDDEPDSTSGSKPASGKATEGGKKTDDKSSSSKKLAVAAPAAVEST. Positions 243-253 are enriched in basic and acidic residues; it reads EGGKKTDDKSS. Positions 255–269 are enriched in low complexity; that stretch reads SKKLAVAAPAAVEST.

Belongs to the GRF family.

The protein resides in the nucleus. In terms of biological role, transcription activator that plays a regulatory role in gibberellin-induced stem elongation. This chain is Growth-regulating factor 11 (GRF11), found in Oryza sativa subsp. japonica (Rice).